The primary structure comprises 515 residues: Putative asparagine synthetase [glutamine-hydrolyzing] 2 (515 aa).

Cysteine 2 (for GATase activity) is an active-site residue. Residues 2–229 (CGINGIIRFG…ARQNLIFDLD (228 aa)) form the Glutamine amidotransferase type-2 domain. Residues 52-56 (RLAIL), 92-94 (NGE), and aspartate 114 each bind L-glutamine. Residues isoleucine 306 and 378 to 379 (SG) each bind ATP.

Belongs to the asparagine synthetase family.

The catalysed reaction is L-aspartate + L-glutamine + ATP + H2O = L-asparagine + L-glutamate + AMP + diphosphate + H(+). The protein operates within amino-acid biosynthesis; L-asparagine biosynthesis; L-asparagine from L-aspartate (L-Gln route): step 1/1. The protein is Putative asparagine synthetase [glutamine-hydrolyzing] 2 of Methanocaldococcus jannaschii (strain ATCC 43067 / DSM 2661 / JAL-1 / JCM 10045 / NBRC 100440) (Methanococcus jannaschii).